Consider the following 429-residue polypeptide: Type II methyltransferase M.AgeI (429 aa).

The region spanning 1-429 is the SAM-dependent MTase C5-type domain; sequence MKTIDLFCGA…MAETIKVAIS (429 aa). Residue C80 is part of the active site.

Belongs to the class I-like SAM-binding methyltransferase superfamily. C5-methyltransferase family.

It carries out the reaction a 2'-deoxycytidine in DNA + S-adenosyl-L-methionine = a 5-methyl-2'-deoxycytidine in DNA + S-adenosyl-L-homocysteine + H(+). Functionally, a methylase, recognizes the double-stranded sequence 5'-ACCGGT-3', methylates C-3 on both strands, and protects the DNA from cleavage by the AgeI endonuclease. The sequence is that of Type II methyltransferase M.AgeI (ageIM) from Thalassovita gelatinovora (Thalassobius gelatinovorus).